A 656-amino-acid chain; its full sequence is tRNA 5-methylaminomethyl-2-thiouridine biosynthesis bifunctional protein MnmC (656 aa).

Residues methionine 1 to alanine 236 are tRNA (mnm(5)s(2)U34)-methyltransferase. Positions isoleucine 260 to serine 656 are FAD-dependent cmnm(5)s(2)U34 oxidoreductase.

The protein in the N-terminal section; belongs to the methyltransferase superfamily. tRNA (mnm(5)s(2)U34)-methyltransferase family. It in the C-terminal section; belongs to the DAO family. Requires FAD as cofactor.

It is found in the cytoplasm. It catalyses the reaction 5-aminomethyl-2-thiouridine(34) in tRNA + S-adenosyl-L-methionine = 5-methylaminomethyl-2-thiouridine(34) in tRNA + S-adenosyl-L-homocysteine + H(+). In terms of biological role, catalyzes the last two steps in the biosynthesis of 5-methylaminomethyl-2-thiouridine (mnm(5)s(2)U) at the wobble position (U34) in tRNA. Catalyzes the FAD-dependent demodification of cmnm(5)s(2)U34 to nm(5)s(2)U34, followed by the transfer of a methyl group from S-adenosyl-L-methionine to nm(5)s(2)U34, to form mnm(5)s(2)U34. This is tRNA 5-methylaminomethyl-2-thiouridine biosynthesis bifunctional protein MnmC from Paraburkholderia phytofirmans (strain DSM 17436 / LMG 22146 / PsJN) (Burkholderia phytofirmans).